The primary structure comprises 145 residues: Photosystem I reaction center subunit VI-1, chloroplastic (145 aa).

A chloroplast-targeting transit peptide spans 1-50 (MASLATVAAVKPSAAIKGLGGSSLAGAKLSIKPSRLSFKPKSIRANGVVA). The chain crosses the membrane as a helical span at residues 102 to 118 (LLLKFLILGGGSLLTYV).

This sequence belongs to the psaH family.

The protein localises to the plastid. It localises to the chloroplast thylakoid membrane. Its function is as follows. Possible role could be the docking of the LHC I antenna complex to the core complex. This chain is Photosystem I reaction center subunit VI-1, chloroplastic (PSAH1), found in Arabidopsis thaliana (Mouse-ear cress).